The primary structure comprises 491 residues: Chromosomal replication initiator protein DnaA (491 aa).

A domain I, interacts with DnaA modulators region spans residues 1 to 69; the sequence is MTTWDKCLKK…TIQECHGNDL (69 aa). The domain II stretch occupies residues 69 to 154; the sequence is LIIEYSNKKF…KEDEEYSFGL (86 aa). The domain III, AAA+ region stretch occupies residues 155 to 371; it reads PLKEKYVFDS…GALNRVLTTS (217 aa). ATP contacts are provided by Gly-199, Gly-201, Lys-202, and Thr-203. Residues 372 to 491 are domain IV, binds dsDNA; the sequence is KFNHKDPTIE…YELLLDKISR (120 aa).

It belongs to the DnaA family. Oligomerizes as a right-handed, spiral filament on DNA at oriC.

The protein resides in the cytoplasm. Functionally, plays an essential role in the initiation and regulation of chromosomal replication. ATP-DnaA binds to the origin of replication (oriC) to initiate formation of the DNA replication initiation complex once per cell cycle. Binds the DnaA box (a 9 base pair repeat at the origin) and separates the double-stranded (ds)DNA. Forms a right-handed helical filament on oriC DNA; dsDNA binds to the exterior of the filament while single-stranded (ss)DNA is stabiized in the filament's interior. The ATP-DnaA-oriC complex binds and stabilizes one strand of the AT-rich DNA unwinding element (DUE), permitting loading of DNA polymerase. After initiation quickly degrades to an ADP-DnaA complex that is not apt for DNA replication. Binds acidic phospholipids. The polypeptide is Chromosomal replication initiator protein DnaA (Francisella tularensis subsp. holarctica (strain OSU18)).